Here is a 73-residue protein sequence, read N- to C-terminus: Conotoxin Vc6.17 (73 aa).

Residues 1–19 (MQKLIILLLVAAVLMSTQA) form the signal peptide. Positions 20–44 (LFQEKRRKEKIDLLSKRKTDAEKQH) are excised as a propeptide. 3 disulfide bridges follow: cysteine 48–cysteine 62, cysteine 55–cysteine 66, and cysteine 61–cysteine 71.

It belongs to the conotoxin O2 superfamily. In terms of tissue distribution, expressed by the venom duct.

The protein localises to the secreted. Its function is as follows. Inhibits voltage-gated ion channels. This chain is Conotoxin Vc6.17, found in Conus victoriae (Queen Victoria cone).